The chain runs to 212 residues: LexA repressor (212 aa).

The H-T-H motif DNA-binding region spans Val-26 to Asp-46. Active-site for autocatalytic cleavage activity residues include Ser-128 and Lys-171.

It belongs to the peptidase S24 family. As to quaternary structure, homodimer.

It carries out the reaction Hydrolysis of Ala-|-Gly bond in repressor LexA.. In terms of biological role, represses a number of genes involved in the response to DNA damage (SOS response), including recA and lexA. In the presence of single-stranded DNA, RecA interacts with LexA causing an autocatalytic cleavage which disrupts the DNA-binding part of LexA, leading to derepression of the SOS regulon and eventually DNA repair. The protein is LexA repressor of Oenococcus oeni (strain ATCC BAA-331 / PSU-1).